The following is a 274-amino-acid chain: Large ribosomal subunit protein uL2cz/uL2cy (274 aa).

Disordered regions lie at residues Met1 to Val22 and Met223 to Lys274.

The protein belongs to the universal ribosomal protein uL2 family. In terms of assembly, part of the 50S ribosomal subunit.

Its subcellular location is the plastid. The protein localises to the chloroplast. The chain is Large ribosomal subunit protein uL2cz/uL2cy (rpl2-A) from Phaseolus vulgaris (Kidney bean).